Here is a 405-residue protein sequence, read N- to C-terminus: Alpha-1-antiproteinase S (405 aa).

The first 24 residues, 1 to 24 (MPSAIPRGLLLLAGLCCLVFGIMA), serve as a signal peptide directing secretion. N-linked (GlcNAc...) asparagine glycosylation is found at asparagine 57, asparagine 94, asparagine 157, and asparagine 258. Residues 360–379 (GATMMEFMPMSLPEDLSFNK) are RCL.

Belongs to the serpin family.

It localises to the secreted. Functionally, inhibits elastase, chymotrypsin, cathepsin G, plasmin, and trypsin. The protein is Alpha-1-antiproteinase S of Cavia porcellus (Guinea pig).